A 555-amino-acid polypeptide reads, in one-letter code: Sulfite reductase [NADPH] hemoprotein beta-component (555 aa).

4 residues coordinate [4Fe-4S] cluster: C430, C436, C475, and C479. Siroheme is bound at residue C479.

The protein belongs to the nitrite and sulfite reductase 4Fe-4S domain family. Alpha(8)-beta(8). The alpha component is a flavoprotein, the beta component is a hemoprotein. Siroheme is required as a cofactor. [4Fe-4S] cluster serves as cofactor.

It catalyses the reaction hydrogen sulfide + 3 NADP(+) + 3 H2O = sulfite + 3 NADPH + 4 H(+). It functions in the pathway sulfur metabolism; hydrogen sulfide biosynthesis; hydrogen sulfide from sulfite (NADPH route): step 1/1. Functionally, component of the sulfite reductase complex that catalyzes the 6-electron reduction of sulfite to sulfide. This is one of several activities required for the biosynthesis of L-cysteine from sulfate. The chain is Sulfite reductase [NADPH] hemoprotein beta-component from Leptospira biflexa serovar Patoc (strain Patoc 1 / Ames).